Reading from the N-terminus, the 142-residue chain is Phosphoribosyl-AMP cyclohydrolase (142 aa).

Position 85 (Asp-85) interacts with Mg(2+). Cys-86 lines the Zn(2+) pocket. The Mg(2+) site is built by Asp-87 and Asp-89. Residues Cys-102 and Cys-109 each coordinate Zn(2+). A disordered region spans residues 120 to 142; the sequence is GEPPTPVGAGERQPASGTADAAP.

The protein belongs to the PRA-CH family. As to quaternary structure, homodimer. Requires Mg(2+) as cofactor. It depends on Zn(2+) as a cofactor.

The protein resides in the cytoplasm. The enzyme catalyses 1-(5-phospho-beta-D-ribosyl)-5'-AMP + H2O = 1-(5-phospho-beta-D-ribosyl)-5-[(5-phospho-beta-D-ribosylamino)methylideneamino]imidazole-4-carboxamide. Its pathway is amino-acid biosynthesis; L-histidine biosynthesis; L-histidine from 5-phospho-alpha-D-ribose 1-diphosphate: step 3/9. Its function is as follows. Catalyzes the hydrolysis of the adenine ring of phosphoribosyl-AMP. The polypeptide is Phosphoribosyl-AMP cyclohydrolase (Acidothermus cellulolyticus (strain ATCC 43068 / DSM 8971 / 11B)).